The following is a 155-amino-acid chain: MAPGTKKKSDMAKFTFYKDRLMTFKNFEYDRDPDAKCTSQAVAQAGFYCTGPQSGKCAFCNKELDFDPEDDPWYEHTKRDEPCEFVRIGKLDDSELTINDTVRLSQTAMIMTKLFEHEMMINNLSNHSSSDALFDQLKKVPNTASTTKSNSRRGK.

Residues 20-87 (RLMTFKNFEY…KRDEPCEFVR (68 aa)) form a BIR repeat. The Zn(2+) site is built by Cys57, Cys60, His76, and Cys83.

It belongs to the IAP family. Component of the CPC complex which consists of icp-1; csc-1; bir-1 and air-2. Within the complex, interacts with csc-1, icp-1 and air-2. Interacts with csc-1 in a zinc-dependent-manner; the interaction is direct. As to expression, expressed in oocytes and sperm.

It localises to the chromosome. The protein resides in the cytoplasm. The protein localises to the cytoskeleton. It is found in the spindle. Its subcellular location is the midbody. In terms of biological role, component of the chromosomal passenger complex (CPC), a complex that acts as a key regulator of chromosome segregation and cytokinesis. The CPC complex has essential functions at the centromere in ensuring correct chromosome condensation, alignment and segregation. In the complex, required to direct the Aurora B/air-2 kinase to chromosomes. Also functions in spindle midzone formation and in the formation of polar bodies during oogenesis. Required for the localization of the kinetochore component hcp-1 to chromosomes. Involved in the positive regulation of transcription. Involved in the transcriptional regulation of collagen genes. This chain is Chromosomal passenger complex protein bir-1, found in Caenorhabditis elegans.